Consider the following 4911-residue polypeptide: Histone-lysine N-methyltransferase 2C (4911 aa).

Residues 1–101 are disordered; sequence MSSEEDKSVE…EDAEAEVDNS (101 aa). A compositionally biased stretch (pro residues) spans 12-28; the sequence is PQPPPPPPEEPGAPAPS. 2 positions are modified to phosphoserine: S28 and S46. A DNA-binding region (a.T hook) is located at residues 34–46; sequence KRPRGRPRKDGAS. Basic residues predominate over residues 50 to 59; sequence RARKKPRSRG. Positions 64 to 81 are enriched in acidic residues; that stretch reads EDEDSMDGLETTETETIV. Position 89 is a phosphoserine (S89). The stretch at 92-112 forms a coiled coil; that stretch reads EDAEAEVDNSKQLIPTLQRSV. Residue S113 is modified to Phosphoserine. The tract at residues 164–203 is disordered; sequence RNQPSNKKDIDDNSNGTYEKMQNSAPRKQRGQRKERSPQQ. Over residues 176–189 the composition is skewed to polar residues; that stretch reads NSNGTYEKMQNSAP. At S200 the chain carries Phosphoserine. Residues 227–262 form a C2HC pre-PHD-type 1; degenerate zinc finger; the sequence is ELSLVGLPDAIDIQALFDSTGTCWAHHRCVEWSLGV. PHD-type zinc fingers lie at residues 283–331, 341–391, 388–438, and 464–520; these read ERCA…PEHI, DANC…CKVC, CKVC…CRIC, and DNLC…CKHL. The segment at 344 to 389 adopts an RING-type zinc-finger fold; sequence CAVCDSPGDLLDQFFCTTCGQHYHGMCLDIAVTPLKRAGWQCPECK. One can recognise a DHHC domain in the interval 436–489; the sequence is RICIECGTRSSSQWHHNCLICDNCYQQQDNLCPFCGKCYHPELQKDMLHCNMCK. Residues 644–672 are a coiled coil; sequence EDKMEVTENIEVVTHQITVQQEQLQLLEE. Basic and acidic residues predominate over residues 721–730; it reads QGEKEQKENS. Residues 721–742 are disordered; the sequence is QGEKEQKENSELSTGLMDSEMT. N6-acetyllysine is present on K758. Positions 763–791 are enriched in low complexity; sequence SSETESSFSSSADISKADVSSSPTPSSDL. 3 disordered regions span residues 763–798, 828–864, and 885–912; these read SSETESSFSSSADISKADVSSSPTPSSDLPSHDMLH, PAITKRKFSPGRPRSKQGAWSTHNTVSPPSWSPDISE, and GRGSGFPGKRRPRGAGLSGRGGRGRSKL. Positions 830–842 are enriched in basic residues; it reads ITKRKFSPGRPRS. Positions 845-856 are enriched in polar residues; the sequence is GAWSTHNTVSPP. Position 854 is a phosphoserine (S854). 3 PHD-type zinc fingers span residues 957–1010, 1007–1057, and 1084–1139; these read QDMC…CTVC, CTVC…CVWC, and LSSC…CRPY. The tract at residues 1215 to 1324 is disordered; sequence AVLQTPPDIQ…LPCRDDGWSE (110 aa). Residues 1224–1270 show a composition bias toward basic and acidic residues; that stretch reads QSEHSRDGEMDDSREGELMDCDGKSESSPEREAVDDETKGVEGTDGV. At S1301 the chain carries Phosphoserine. Positions 1338–1366 form a coiled coil; that stretch reads TESTEKIKKRYRKRKNKLEETFPAYLQEA. The segment covering 1406 to 1416 has biased composition (low complexity); that stretch reads PSLDPLLSSSS. Disordered regions lie at residues 1406–1431 and 1458–1485; these read PSLDPLLSSSSAPTKSGTHGPADDPL and HSDIGPVTDDPSSLPQPNVNQSSRPLSE. The span at 1467–1482 shows a compositional bias: polar residues; that stretch reads DPSSLPQPNVNQSSRP. K1508 carries the N6-acetyllysine modification. Disordered stretches follow at residues 1604-1630 and 1709-2448; these read FNPMASDPNNSWTSSAPTVEGENDTMS and VQMS…SPVA. Composition is skewed to polar residues over residues 1610-1620 and 1709-1727; these read DPNNSWTSSAP and VQMSNDSMKRQQQQDSIDP. Over residues 1729–1753 the composition is skewed to basic and acidic residues; sequence SRIDSELFKDPLKQRESEHEQEWKF. Residues 1754 to 1787 are a coiled coil; that stretch reads RQQMRQKSKQQAKIEATQKLEQVKNEQQQQQQQQ. The residue at position 1772 (K1772) is an N6-acetyllysine. The segment covering 1788-1823 has biased composition (polar residues); that stretch reads FGSQHLLVQSGSDTPSSGIQSPLTPQPGNGNMSPAQ. Positions 1851–1860 are enriched in pro residues; the sequence is QAPPPPPAPS. A compositionally biased stretch (low complexity) spans 1861–1875; that stretch reads RIPIQDSLSQAQTSQ. A compositionally biased stretch (polar residues) spans 1927–1945; it reads TPLSSVSRPLQMNETTANR. S1987 carries the phosphoserine modification. Position 2009 is an N6-acetyllysine (K2009). Composition is skewed to polar residues over residues 2054–2065, 2085–2094, 2115–2131, and 2144–2159; these read QDPYGSVSQASR, FSHNQSNDPY, AFSQPGTISRPTSQDPY, and SYSQSSGTARSNTDPY. Low complexity predominate over residues 2173–2187; it reads PYSQQPQTPRPSTQT. 3 stretches are compositionally biased toward polar residues: residues 2302-2319, 2335-2353, and 2362-2375; these read SPMTPRSQSDSFGTSQTA, CASSNSPMHSQGQQFSGVS, and SGVTDTQNTVNMAQ. Over residues 2377 to 2389 the composition is skewed to basic and acidic residues; that stretch reads DTEKLRQRQKLRE. Over residues 2390-2399 the composition is skewed to low complexity; sequence IILQQQQQKK. An asymmetric dimethylarginine mark is found at R2454 and R2571. Disordered stretches follow at residues 2589–2694, 2793–2887, 2925–2954, and 2989–3029; these read RHGN…SDDP, EPKK…RETA, EKSDNSDIRPSGSPPPPTLPASPSNHVSSL, and VNPG…SGPQ. 2 stretches are compositionally biased toward polar residues: residues 2629-2645 and 2661-2682; these read PPSQQEQGHSVHSSSMV and PLSTSVPSETTSDNLQITTQPS. Basic and acidic residues predominate over residues 2793–2811; it reads EPKKKEQENKTLVLSDKHS. N6-acetyllysine occurs at positions 2802 and 2809. Polar residues predominate over residues 2814–2832; sequence KKSTVTNEVKTEVLSPNSK. At S2828 the chain carries Phosphoserine. Position 2832 is an N6-acetyllysine (K2832). Over residues 2833–2849 the composition is skewed to basic and acidic residues; that stretch reads VESKCETEKNDENKDNV. The span at 2851–2860 shows a compositional bias: polar residues; that stretch reads TPCSQASAHS. Over residues 2861–2884 the composition is skewed to basic and acidic residues; it reads DLNDGEKTSLHPCDPDLFEKRTNR. N6-acetyllysine is present on K2867. Residues 3011-3029 show a composition bias toward low complexity; that stretch reads TQTGPQTSQSGTSSMSGPQ. 3 coiled-coil regions span residues 3054–3081, 3173–3272, and 3391–3433; these read LLQDLLDQERQEQQQQRQMQAMIRQRSE, NDSQ…QQQQ, and FSES…EMEQ. Residues 3205–3221 are compositionally biased toward basic residues; that stretch reads HRKSKKALSAKQRTAKK. Disordered stretches follow at residues 3205-3241, 3353-3409, 3527-3583, 3596-3919, and 4024-4053; these read HRKSKKALSAKQRTAKKAGREFPEEDAEQLKHVTEQQ, PPIA…EQQE, PNFS…HSYP, IIPE…MANG, and VKEEPPEPVPSPIIPILPSTAGKSSESRRN. Composition is skewed to basic and acidic residues over residues 3222-3238 and 3395-3409; these read AGREFPEEDAEQLKHVT and FQERERKERLREQQE. Polar residues-rich tracts occupy residues 3527-3549, 3564-3583, 3637-3658, and 3684-3701; these read PNFSSVKQGHGNLSGTSFQQSPV, ANSSLPCGQDSTITHGHSYP, ISETTSTPAVSTPSELPQQADQ, and LPNSDFSQATPNQQTYAN. Basic and acidic residues predominate over residues 3703-3725; sequence EVDKLSMETPAKTEEIKLEKAET. K3714 carries the N6-acetyllysine modification. At S3758 the chain carries Phosphoserine. Residues 3803-3812 show a composition bias toward basic and acidic residues; sequence DCTKDNKLVE. A compositionally biased stretch (polar residues) spans 3878-3892; sequence MYSSTDTFTHLKQQN. The segment covering 3897-3911 has biased composition (pro residues); the sequence is PPTPPASLPPTPPPM. Position 4034 is a phosphoserine (S4034). Position 4139 is an asymmetric dimethylarginine (R4139). A Phosphoserine modification is found at S4267. The segment at 4399–4439 adopts a C2HC pre-PHD-type 2 zinc-finger fold; sequence YRKCCFCHEEGDGLTDGPARLLNLDLDLWVHLNCALWSTEV. The PHD-type 8 zinc-finger motif lies at 4460 to 4507; sequence MKCVFCHKTGATSGCHRFRCTNIYHFTCAIKAQCMFFKDKTMLCPMHK. Residues 4545 to 4605 form the FYR N-terminal domain; that stretch reads DHTFRVGSLI…CRYLCSIEEK (61 aa). One can recognise an FYR C-terminal domain in the interval 4606–4691; the sequence is DGRPVFVIRI…EACENYTFRY (86 aa). Residues 4707 to 4712 carry the WDR5 interaction motif (WIN) motif; it reads GCARSE. One can recognise an SET domain in the interval 4771–4887; the sequence is SNVYLARSRI…KGEELCYDYK (117 aa). S-adenosyl-L-methionine is bound by residues Y4825 and 4848-4849; that span reads NH. Zn(2+) contacts are provided by C4851, C4899, C4901, and C4906. In terms of domain architecture, Post-SET spans 4895 to 4911; the sequence is HKIPCHCGAVNCRKWMN.

Belongs to the class V-like SAM-binding methyltransferase superfamily. Histone-lysine methyltransferase family. TRX/MLL subfamily. Component of the MLL3 complex (also named ASCOM complex), at least composed of catalytic subunit KMT2C/MLL3, ASH2L, RBBP5, WDR5, NCOA6, DPY30, KDM6A, PAXIP1/PTIP, PAGR1 and alpha- and beta-tubulin. Forms a core complex with the evolutionary conserved subcomplex WRAD composed of WDR5, RBBP5, ASH2L/ASH2 and DPY30 subunits; WRAD differentially stimulates the methyltransferase activity. Interacts (via WIN motif) with WDR5. As to expression, highly expressed in testis and ovary, followed by brain and liver. Also expressed in placenta, peripherical blood, fetal thymus, heart, lung and kidney. Within brain, expression was highest in hippocampus, caudate nucleus, and substantia nigra. Not detected in skeletal muscle and fetal liver.

Its subcellular location is the nucleus. The catalysed reaction is L-lysyl(4)-[histone H3] + S-adenosyl-L-methionine = N(6)-methyl-L-lysyl(4)-[histone H3] + S-adenosyl-L-homocysteine + H(+). Histone methyltransferase that catalyzes methyl group transfer from S-adenosyl-L-methionine to the epsilon-amino group of 'Lys-4' of histone H3 (H3K4). Part of chromatin remodeling machinery predominantly forms H3K4me1 methylation marks at active chromatin sites where transcription and DNA repair take place. Likely plays a redundant role with KMT2D in enriching H3K4me1 mark on primed and active enhancer elements. The protein is Histone-lysine N-methyltransferase 2C (KMT2C) of Homo sapiens (Human).